Here is a 69-residue protein sequence, read N- to C-terminus: Large ribosomal subunit protein uL29 (69 aa).

This sequence belongs to the universal ribosomal protein uL29 family.

This Staphylococcus aureus (strain Mu3 / ATCC 700698) protein is Large ribosomal subunit protein uL29.